Consider the following 224-residue polypeptide: Synaptogyrin-2 (224 aa).

The residue at position 1 (Met1) is an N-acetylmethionine. Ser3 carries the post-translational modification Phosphoserine. In terms of domain architecture, MARVEL spans 20-171 (FLKQPQVVVR…LAFLAYQRYK (152 aa)). Transmembrane regions (helical) follow at residues 26-46 (VVVRAVCLVFALIVFSCIFGE), 73-93 (AIGVLAFLASAFFFVVDIYFP), 105-125 (VIGDLLFSALWTFLWFVGFCF), and 147-167 (AAITFSFFSIFSWCVLAFLAY). Residues 196 to 224 (PGVPADTYQQPPFTQNAESTEGYQPPPVY) form a disordered region. The segment covering 202 to 217 (TYQQPPFTQNAESTEG) has biased composition (polar residues).

This sequence belongs to the synaptogyrin family. In terms of processing, may be tyrosine phosphorylated by Src.

It localises to the cytoplasmic vesicle membrane. It is found in the cytoplasmic vesicle. The protein localises to the secretory vesicle. The protein resides in the synaptic vesicle membrane. Its function is as follows. May play a role in regulated exocytosis. In neuronal cells, modulates the localization of synaptophysin/SYP into synaptic-like microvesicles and may therefore play a role in the formation and/or the maturation of this vesicles. May also play a role in GLUT4 storage and transport to the plasma membrane. The chain is Synaptogyrin-2 from Bos taurus (Bovine).